The sequence spans 148 residues: Large ribosomal subunit protein uL15 (148 aa).

The tract at residues 1–51 is disordered; the sequence is MNLSSLKPAEGAVKSRKRIGRGPGSGLGGTSTRGHKGAKSRSGYSKKIGFE. Gly residues predominate over residues 21–31; the sequence is RGPGSGLGGTS.

The protein belongs to the universal ribosomal protein uL15 family. As to quaternary structure, part of the 50S ribosomal subunit.

In terms of biological role, binds to the 23S rRNA. This Porphyromonas gingivalis (strain ATCC BAA-308 / W83) protein is Large ribosomal subunit protein uL15.